The primary structure comprises 276 residues: Undecaprenyl-diphosphatase (276 aa).

8 helical membrane-spanning segments follow: residues 1-21 (MELYQGVVLGVLQGLTEFLPV), 40-60 (ALSFDISVHLGTLFAVALVFF), 93-113 (VRLAALIIVGSIPTAVIGLIL), 120-140 (LFSSLVIVGSMLMVTGTFLWL), 154-174 (IGFGTALFIGVCQGVAVIPGI), 199-219 (FLLSMPAIAGAEILSLKESFA), 227-247 (VTLLSTLTAFIVGTLALVALL), and 255-275 (FYLFAPYCWVVGLISIIAGFV).

Belongs to the UppP family.

It is found in the cell inner membrane. The enzyme catalyses di-trans,octa-cis-undecaprenyl diphosphate + H2O = di-trans,octa-cis-undecaprenyl phosphate + phosphate + H(+). Catalyzes the dephosphorylation of undecaprenyl diphosphate (UPP). Confers resistance to bacitracin. In Desulforapulum autotrophicum (strain ATCC 43914 / DSM 3382 / VKM B-1955 / HRM2) (Desulfobacterium autotrophicum), this protein is Undecaprenyl-diphosphatase.